The primary structure comprises 202 residues: Alpha-latrotoxin-Lm1a (202 aa).

ANK repeat units lie at residues 95 to 109, 110 to 120, 122 to 132, 133 to 138, 142 to 161, 163 to 170, 171 to 182, K184, 185 to 191, and 193 to 202; these read LYNAASNPDSAVGFK, LMESPEININE, NDWPVASTLLR, SSNVNV, NSDTPLNLAYFIDQGADINT, NGHLNIVK, YLVEEEDLSVDG, YGIDMTI, and TALDIATDLK. The 4C4.1 epitope stretch occupies residues 175–181; that stretch reads EEDLSVD.

Belongs to the cationic peptide 01 (latrotoxin) family. 03 (alpha-latrotoxin) subfamily. As to quaternary structure, homotetramer in membranes. In terms of processing, processed by furin-like proteases at both the N- and C-termini. Contains 1 disulfide bond. Expressed in venom gland, cephalothorax, and abdomen tissues from both males and females.

The protein localises to the secreted. It is found in the target cell membrane. Functionally, presynaptic neurotoxin that causes massive release of neurotransmitters from vertebrate (but not invertebrate) nerve terminals and endocrine cells via a complex mechanism involving activation of receptor(s) and toxin insertion into the plasma membrane with subsequent pore formation. Binds to neurexin-1-alpha (NRXN1) in a calcium dependent manner, adhesion G protein-coupled receptor L1 (ADGRL1, also termed latrophilin-1 and calcium-independent receptor of latrotoxin (CIRL)), and receptor-type tyrosine-protein phosphatase S (PTPRS), also termed PTP sigma. NRXN1 and PTPRS are suggested to provide a platform for binding and subsequent pore formation events. In contrast, binding to ADGRL1 does not involve oligomerization and channel formation, but direct downstream stimulation of the synaptic fusion machinery. This is Alpha-latrotoxin-Lm1a from Latrodectus mactans (Black widow spider).